The sequence spans 95 residues: Protein YY1 (95 aa).

A signal peptide spans 1–26 (MAVTRTALLVVLVAGAMTMTMRGAEA). Cystine bridges form between Cys-31–Cys-72, Cys-41–Cys-61, Cys-62–Cys-87, and Cys-74–Cys-94.

This sequence belongs to the A9/FIL1 family. In terms of tissue distribution, anther.

It localises to the secreted. The chain is Protein YY1 from Oryza sativa subsp. japonica (Rice).